The sequence spans 321 residues: Necdin (321 aa).

The interval 1 to 96 (MSEQSKDLSD…QPGPAPPAPA (96 aa)) is disordered. Residues 20 to 35 (SEVHSSPGVSEGVPPS) are compositionally biased toward low complexity. Residues 98–297 (LVQKAHELMW…QAWPSRYREA (200 aa)) enclose the MAGE domain.

Binds to the transactivation domains of E2F1 and p53. Binds also SV40 large T antigen and adenovirus E1A. Interacts with nucleobindin 1 and 2. In terms of tissue distribution, almost ubiquitous. Detected in fetal brain, lung, liver and kidney; in adult heart, brain, placenta, lung, liver, skeletal muscle, kidney, pancreas, spleen, thymus, prostate, testis, ovary, small intestine and colon. Not detected in peripheral blood leukocytes. In brain, restricted to post-mitotic neurons.

It localises to the perikaryon. Its subcellular location is the nucleus. Functionally, growth suppressor that facilitates the entry of the cell into cell cycle arrest. Functionally similar to the retinoblastoma protein it binds to and represses the activity of cell-cycle-promoting proteins such as SV40 large T antigen, adenovirus E1A, and the transcription factor E2F. Necdin also interacts with p53 and works in an additive manner to inhibit cell growth. Also functions as a transcription factor and directly binds to specific guanosine-rich DNA sequences. This Homo sapiens (Human) protein is Necdin (NDN).